We begin with the raw amino-acid sequence, 715 residues long: MQLERAAFSDPFSFLGPQYQSQTTALRVWLPGATSVKVRLSGHVEYQLLSDPRHSGIFVLNESIDMTEVHYELIIDWSGTEQILDDPYQYHDISPTDAQVHTPKEMYNHLGAHLFNVVRDGKQIQGVRYLVFAPNASSASVIGDFNQWDGRRHIMQRIDNGLWALFIPEHAVGTKYKFELKGPNGESLPHKMDPYGAHNEQYPSFASVVYDQTSYQWNDAKWQQRPVTEKQKEALSFYELHAGSWKRNENGDFLTYRELAEQLIPYILDMGYTHIELMPVSEHPFYGSWGYQPIGLFSPTSRFGTPDDFKYFVDQCHQVGIGVVLDWVPAHFPSDSHGLANFDGTSLFNDPDPRRGWHNDWQSFIYNYDQPHVREFLVSNALYWFEHFHIDGLRVDAVASMLYLDYSRNDGEWIPNWEGGNHNHGAIALLKWMNEEVYSHYPNAMTIAEESTAFPGVSAPTFAGGLGFGFKWNMGWMHDSLNYIREDPIHRKYHHDTITFPLVYAFSENFILSLSHDEVVYGKGSILDKMPGDEWQKTANLRAYMGYMYGQPGKKLNFMGAEIAQSAEWDHDGQLQWFLTQFERHSGMQSLVRDLNKLYTTEPALYQKDCEPAGFEWRLQDEAEMSVLAHERLGDNGERILVVSNFTPAPREDFRLGMPVAGQYELILNSDAHFYGGSDYSVISEASTEKVESQGLAQSIVITLPPLSTVFYRLK.

The Nucleophile role is filled by D396. Catalysis depends on E449, which acts as the Proton donor.

The protein belongs to the glycosyl hydrolase 13 family. GlgB subfamily. Monomer.

The enzyme catalyses Transfers a segment of a (1-&gt;4)-alpha-D-glucan chain to a primary hydroxy group in a similar glucan chain.. Its pathway is glycan biosynthesis; glycogen biosynthesis. Catalyzes the formation of the alpha-1,6-glucosidic linkages in glycogen by scission of a 1,4-alpha-linked oligosaccharide from growing alpha-1,4-glucan chains and the subsequent attachment of the oligosaccharide to the alpha-1,6 position. The chain is 1,4-alpha-glucan branching enzyme GlgB from Aliivibrio fischeri (strain ATCC 700601 / ES114) (Vibrio fischeri).